Here is a 268-residue protein sequence, read N- to C-terminus: Small ribosomal subunit protein eS1 (268 aa).

A disordered region spans residues 1–21 (MAVGKNKGLSKGGKKGGKKKV).

Belongs to the eukaryotic ribosomal protein eS1 family. In terms of assembly, component of the small ribosomal subunit. Mature ribosomes consist of a small (40S) and a large (60S) subunit. The 40S subunit contains about 33 different proteins and 1 molecule of RNA (18S). The 60S subunit contains about 49 different proteins and 3 molecules of RNA (28S, 5.8S and 5S).

It is found in the cytoplasm. Functionally, essential for oogenesis; required for late follicle cell development. This chain is Small ribosomal subunit protein eS1, found in Drosophila mojavensis (Fruit fly).